A 264-amino-acid polypeptide reads, in one-letter code: SPRY domain-containing SOCS box protein 2 (264 aa).

The segment covering 1–19 (MGQTALARGSSSTPTSQAL) has biased composition (polar residues). The segment at 1–34 (MGQTALARGSSSTPTSQALYSDFSPPEGLEELLS) is disordered. The region spanning 26-221 (PEGLEELLSA…VRIRYMGERR (196 aa)) is the B30.2/SPRY domain. The 43-residue stretch at 222-264 (VEEPQSLLHLSRLCVRHALGDTRLGQISTLPLPPAMKRYLLYK) folds into the SOCS box domain.

It belongs to the SPSB family. As to quaternary structure, component of the probable ECS(SPSB2) E3 ubiquitin-protein ligase complex which contains CUL5, RNF7/RBX2, Elongin BC complex and SPSB2. Interacts with CUL5, RNF7, ELOB and ELOC. Interacts with MET. Interacts (via B30.2/SPRY domain) with PAWR; this interaction occurs in association with the Elongin BC complex. Interacts with NOS2.

It is found in the cytoplasm. It localises to the cytosol. It participates in protein modification; protein ubiquitination. Functionally, substrate recognition component of a SCF-like ECS (Elongin BC-CUL2/5-SOCS-box protein) E3 ubiquitin-protein ligase complex which mediates the ubiquitination and subsequent proteasomal degradation of target proteins. Negatively regulates nitric oxide (NO) production and limits cellular toxicity in activated macrophages by mediating the ubiquitination and proteasomal degradation of NOS2. Acts as a bridge which links NOS2 with the ECS E3 ubiquitin ligase complex components ELOC and CUL5. This Mus musculus (Mouse) protein is SPRY domain-containing SOCS box protein 2 (Spsb2).